Consider the following 349-residue polypeptide: Beta-hexosaminidase (349 aa).

Substrate contacts are provided by residues D64, R72, R138, and 168 to 169 (KH). Catalysis depends on H181, which acts as the Proton donor/acceptor. The active-site Nucleophile is the D252.

Belongs to the glycosyl hydrolase 3 family. NagZ subfamily.

The protein resides in the cytoplasm. The enzyme catalyses Hydrolysis of terminal non-reducing N-acetyl-D-hexosamine residues in N-acetyl-beta-D-hexosaminides.. It participates in cell wall biogenesis; peptidoglycan recycling. Plays a role in peptidoglycan recycling by cleaving the terminal beta-1,4-linked N-acetylglucosamine (GlcNAc) from peptide-linked peptidoglycan fragments, giving rise to free GlcNAc, anhydro-N-acetylmuramic acid and anhydro-N-acetylmuramic acid-linked peptides. This Methylobacillus flagellatus (strain ATCC 51484 / DSM 6875 / VKM B-1610 / KT) protein is Beta-hexosaminidase.